Reading from the N-terminus, the 313-residue chain is tRNA dimethylallyltransferase (313 aa).

An ATP-binding site is contributed by G17 to T24. T19–T24 is a binding site for substrate. 4 interaction with substrate tRNA regions span residues D42 to L45, Q166 to R170, R247 to R252, and K280 to R287.

This sequence belongs to the IPP transferase family. Monomer. It depends on Mg(2+) as a cofactor.

The enzyme catalyses adenosine(37) in tRNA + dimethylallyl diphosphate = N(6)-dimethylallyladenosine(37) in tRNA + diphosphate. Functionally, catalyzes the transfer of a dimethylallyl group onto the adenine at position 37 in tRNAs that read codons beginning with uridine, leading to the formation of N6-(dimethylallyl)adenosine (i(6)A). The sequence is that of tRNA dimethylallyltransferase from Proteus mirabilis (strain HI4320).